The primary structure comprises 182 residues: Ribosome-recycling factor (182 aa).

This sequence belongs to the RRF family.

Its subcellular location is the cytoplasm. In terms of biological role, responsible for the release of ribosomes from messenger RNA at the termination of protein biosynthesis. May increase the efficiency of translation by recycling ribosomes from one round of translation to another. The polypeptide is Ribosome-recycling factor (Synechococcus sp. (strain CC9605)).